The sequence spans 360 residues: Peptide chain release factor 1 (360 aa).

An N5-methylglutamine modification is found at Q235. A disordered region spans residues K285–S304.

This sequence belongs to the prokaryotic/mitochondrial release factor family. In terms of processing, methylated by PrmC. Methylation increases the termination efficiency of RF1.

The protein localises to the cytoplasm. Peptide chain release factor 1 directs the termination of translation in response to the peptide chain termination codons UAG and UAA. The polypeptide is Peptide chain release factor 1 (Edwardsiella ictaluri (strain 93-146)).